Reading from the N-terminus, the 540-residue chain is CTP synthase (540 aa).

Residues 1–266 (MAVKYIFVTG…LTPIARHLEL (266 aa)) are amidoligase domain. Ser-14 serves as a coordination point for CTP. Ser-14 serves as a coordination point for UTP. Residues 15-20 (SLGKGI) and Asp-72 contribute to the ATP site. Asp-72 and Glu-140 together coordinate Mg(2+). Residues 147–149 (DIE), 187–192 (KTKPTQ), and Lys-223 each bind CTP. UTP-binding positions include 187–192 (KTKPTQ) and Lys-223. The Glutamine amidotransferase type-1 domain maps to 291–540 (TIGFVGKYLS…VKETLAHKKT (250 aa)). Gly-351 is an L-glutamine binding site. Residue Cys-378 is the Nucleophile; for glutamine hydrolysis of the active site. Residues 379 to 382 (LGMQ), Glu-402, and Arg-470 each bind L-glutamine. Catalysis depends on residues His-513 and Glu-515.

The protein belongs to the CTP synthase family. Homotetramer.

It catalyses the reaction UTP + L-glutamine + ATP + H2O = CTP + L-glutamate + ADP + phosphate + 2 H(+). The catalysed reaction is L-glutamine + H2O = L-glutamate + NH4(+). It carries out the reaction UTP + NH4(+) + ATP = CTP + ADP + phosphate + 2 H(+). It functions in the pathway pyrimidine metabolism; CTP biosynthesis via de novo pathway; CTP from UDP: step 2/2. Allosterically activated by GTP, when glutamine is the substrate; GTP has no effect on the reaction when ammonia is the substrate. The allosteric effector GTP functions by stabilizing the protein conformation that binds the tetrahedral intermediate(s) formed during glutamine hydrolysis. Inhibited by the product CTP, via allosteric rather than competitive inhibition. Functionally, catalyzes the ATP-dependent amination of UTP to CTP with either L-glutamine or ammonia as the source of nitrogen. Regulates intracellular CTP levels through interactions with the four ribonucleotide triphosphates. The polypeptide is CTP synthase (Helicobacter hepaticus (strain ATCC 51449 / 3B1)).